Here is a 238-residue protein sequence, read N- to C-terminus: Ribonuclease PH (238 aa).

Residues R86 and 124 to 126 (GTR) contribute to the phosphate site.

This sequence belongs to the RNase PH family. Homohexameric ring arranged as a trimer of dimers.

The enzyme catalyses tRNA(n+1) + phosphate = tRNA(n) + a ribonucleoside 5'-diphosphate. Its function is as follows. Phosphorolytic 3'-5' exoribonuclease that plays an important role in tRNA 3'-end maturation. Removes nucleotide residues following the 3'-CCA terminus of tRNAs; can also add nucleotides to the ends of RNA molecules by using nucleoside diphosphates as substrates, but this may not be physiologically important. Probably plays a role in initiation of 16S rRNA degradation (leading to ribosome degradation) during starvation. The chain is Ribonuclease PH from Anaeromyxobacter sp. (strain Fw109-5).